Consider the following 373-residue polypeptide: T-protein (373 aa).

The region spanning 1-90 (MVAELTALRD…ESYTSENDKG (90 aa)) is the Chorismate mutase domain. Residues 99–361 (RPVVIVGGKG…DHAKRFLVES (263 aa)) form the Prephenate/arogenate dehydrogenase domain.

It in the C-terminal section; belongs to the prephenate/arogenate dehydrogenase family.

The protein localises to the cytoplasm. The enzyme catalyses chorismate = prephenate. It carries out the reaction prephenate + NAD(+) = 3-(4-hydroxyphenyl)pyruvate + CO2 + NADH. It participates in amino-acid biosynthesis; L-tyrosine biosynthesis; (4-hydroxyphenyl)pyruvate from prephenate (NAD(+) route): step 1/1. The protein operates within metabolic intermediate biosynthesis; prephenate biosynthesis; prephenate from chorismate: step 1/1. This is T-protein (tyrA) from Enterobacter agglomerans (Erwinia herbicola).